The sequence spans 378 residues: Ribosomal RNA large subunit methyltransferase G (378 aa).

It belongs to the methyltransferase superfamily. RlmG family.

Its subcellular location is the cytoplasm. It carries out the reaction guanosine(1835) in 23S rRNA + S-adenosyl-L-methionine = N(2)-methylguanosine(1835) in 23S rRNA + S-adenosyl-L-homocysteine + H(+). In terms of biological role, specifically methylates the guanine in position 1835 (m2G1835) of 23S rRNA. This Salmonella paratyphi B (strain ATCC BAA-1250 / SPB7) protein is Ribosomal RNA large subunit methyltransferase G.